The sequence spans 260 residues: Cell division protein FtsQ (260 aa).

Topologically, residues 1–26 are cytoplasmic; that stretch reads MINKVLLEGQRITRSPQVKQHACGAS. The chain crosses the membrane as a helical span at residues 27-47; it reads FFLVVLLLIGGLLYSTISWMW. The Periplasmic portion of the chain corresponds to 48-260; that stretch reads DEQRLPLSKL…QELTQEKNDD (213 aa). Residues 52-122 form the POTRA domain; sequence LPLSKLVLQG…DTIKVYLTEY (71 aa).

It belongs to the FtsQ/DivIB family. FtsQ subfamily. Part of a complex composed of FtsB, FtsL and FtsQ.

The protein resides in the cell inner membrane. In terms of biological role, essential cell division protein. May link together the upstream cell division proteins, which are predominantly cytoplasmic, with the downstream cell division proteins, which are predominantly periplasmic. May control correct divisome assembly. In Vibrio cholerae serotype O1 (strain ATCC 39315 / El Tor Inaba N16961), this protein is Cell division protein FtsQ.